Here is a 544-residue protein sequence, read N- to C-terminus: Chaperonin GroEL 1 (544 aa).

ATP-binding positions include Thr-30–Pro-33, Asp-87–Thr-91, Gly-415, Asn-480–Ala-482, and Asp-496.

This sequence belongs to the chaperonin (HSP60) family. In terms of assembly, forms a cylinder of 14 subunits composed of two heptameric rings stacked back-to-back. Interacts with the co-chaperonin GroES.

It localises to the cytoplasm. The catalysed reaction is ATP + H2O + a folded polypeptide = ADP + phosphate + an unfolded polypeptide.. Together with its co-chaperonin GroES, plays an essential role in assisting protein folding. The GroEL-GroES system forms a nano-cage that allows encapsulation of the non-native substrate proteins and provides a physical environment optimized to promote and accelerate protein folding. The protein is Chaperonin GroEL 1 of Polaromonas naphthalenivorans (strain CJ2).